Here is a 496-residue protein sequence, read N- to C-terminus: Glycine receptor subunit beta (496 aa).

Positions Met-1–Ala-22 are cleaved as a signal peptide. Residues Lys-23 to Phe-268 lie on the Extracellular side of the membrane. The segment at Gly-32–Pro-53 is disordered. The N-linked (GlcNAc...) asparagine glycan is linked to Asn-54. Residues Arg-108 and Ser-174 each coordinate glycine. A disulfide bridge connects residues Cys-183 and Cys-197. N-linked (GlcNAc...) asparagine glycosylation occurs at Asn-242. Residues Cys-243 and Cys-255 are joined by a disulfide bond. A glycine-binding site is contributed by Thr-250. Residues Tyr-269–Trp-289 form a helical membrane-spanning segment. The Cytoplasmic segment spans residues Ile-290 to Ala-294. The chain crosses the membrane as a helical span at residues Ser-295–Thr-315. At Leu-316–Lys-327 the chain is on the extracellular side. The helical transmembrane segment at Ala-328 to Val-349 threads the bilayer. The Cytoplasmic segment spans residues Val-350 to Arg-471. Thr-391 is subject to Phosphothreonine. Residues Ile-472–Tyr-495 form a helical membrane-spanning segment. A topological domain (extracellular) is located at residue Leu-496.

It belongs to the ligand-gated ion channel (TC 1.A.9) family. Glycine receptor (TC 1.A.9.3) subfamily. GLRB sub-subfamily. In terms of assembly, forms heteropentamers with glycin receptor alpha subunits. Heteropentamers with GLRA1 can be composed of two GLRA1 and three GLRB subunits, or three GLRA1 and two GLRB subunits, or four GLRA1 subunits and one GLRB subunit. Forms heteropentamers with GLRA2. Functional GLRB-GLRA2 heteropentamers contain four GLRA2 subunits and one GLRB subunit, although alternative subunit composition cannot be excluded. Forms a heteropentamer with GLRA3. Interacts with GPHN. Detected in spinal cord, brain and brain stem, especially in the periolivary region, spinal nuclei, trigeminal nucleus, medulla oblongata, pons and midbrain. Detected in the inner plexiform layer of the retina (at protein level). High levels of expression in cortex, hippocampus, thalamus and cerebellum. Detected in spinal cord.

It is found in the postsynaptic cell membrane. Its subcellular location is the synapse. The protein resides in the cell projection. The protein localises to the dendrite. It localises to the cell membrane. It is found in the cytoplasm. It catalyses the reaction chloride(in) = chloride(out). Channel opening is triggered by extracellular glycine. Heteropentameric channels composed of GLRB and GLRA1 are activated by lower glycine levels than homopentameric GLRA1. In terms of biological role, subunit of heteromeric glycine-gated chloride channels. Plays an important role in the down-regulation of neuronal excitability. Contributes to the generation of inhibitory postsynaptic currents. The chain is Glycine receptor subunit beta (Glrb) from Mus musculus (Mouse).